The chain runs to 255 residues: SKA complex subunit 1 (255 aa).

N-acetylalanine is present on alanine 2. The stretch at isoleucine 49–valine 91 forms a coiled coil. Residues proline 92–arginine 132 are flexiple loop that anchors MAPRE1. The SXLP motif; mediates interaction with MAPRE1, targeting to microtubule plus ends, stabilization on kinetochores and is required for proper chromosome alignment to the metaphase plate signature appears at serine 93 to proline 96. Positions lysine 106–glutamine 131 are disordered. The span at glutamate 114–glutamine 131 shows a compositional bias: basic and acidic residues. Residues arginine 132–threonine 255 form a binds microtubules and protein phosphatase PP1 subunit PPP1CA region. Threonine 157 carries the phosphothreonine; by AURKB modification. Serine 242 carries the phosphoserine; by AURKB modification.

Belongs to the SKA1 family. As to quaternary structure, component of the SKA complex, composed of SKA1, SKA2 and SKA3. The SKA complex is a homodimer organized around a central W-shaped coiled-coil structure, formed by the interacting domains of SKA1, SKA2, and SKA3, each end of the 'W' is extended further by the C-terminal microtubule-binding domains of SKA1 and SKA3; the complex forms extended structures on microtubules. Interacts (via SXLP motif) with MAPRE1 (via C-terminus); the interaction is direct and stabilizes the kinetochore-microtubule attachment of the SKA1 complex. Interacts (via C-terminus) with protein phosphatase PP1 subunit PPP1CA; the interaction is direct and required for recruitment of PPP1CA to the kinetochore. Interacts with the NDC80 complex; the interaction is required to establish kinetochore-microtubule end-on attachments. In terms of processing, phosphorylated by AURKB at Thr-157 and Ser-242 which negatively regulates the association of the SKA complex with kinetochores to allow correction of aberrant kinetochore-microtubule interactions and promote mitotic sister chromatid biorientation.

It is found in the cytoplasm. The protein localises to the cytoskeleton. Its subcellular location is the spindle. The protein resides in the chromosome. It localises to the centromere. It is found in the kinetochore. The protein localises to the microtubule organizing center. Its subcellular location is the centrosome. Functionally, component of the SKA complex, a microtubule plus end-binding complex of the outer kinetochore that stabilizes spindle microtubule-kinetochore attachments, promotes alignment of chromosomes at the mitotic spindle equator (chromosome congression) and assists suppression of the spindle assembly checkpoint. Kinetochores, consisting of a centromere-associated inner segment and a microtubule-contacting outer segment, play a crucial role in chromosome segregation by mediating the physical connection between centromeric DNA and spindle microtubules. The outer kinetochore is made up of the ten-subunit KMN network complex, comprising the MIS12, NDC80 and KNL1 complexes, and auxiliary microtubule-associated components such as the SKA complex; together they connect the outer kinetochore with the inner kinetochore, bind microtubules, and mediate interactions with mitotic checkpoint proteins that delay anaphase until chromosomes are bioriented on the spindle. The SKA complex is loaded onto bioriented kinetochores and it facilitates chromosome congression by stabilizing microtubules together with MAPRE1, and end-on attachment of the NDC80 complex to depolymerizing spindle microtubules, thereby assisting the poleward-moving kinetochore in withstanding microtubule pulling forces. The complex associates with dynamic microtubule plus-ends and can track both depolymerizing and elongating microtubules. The complex recruits protein phosphatase 1 (PP1) to the kinetochore in prometaphase and metaphase, to oppose spindle assembly checkpoint signaling and promote the onset of anaphase. In the complex, it mediates interactions with microtubules. It also stimulates AURKB/Aurora B catalytic activity. During meiosis the SKA complex stabilizes the meiotic spindle and is required for its migration to the cortex. This is SKA complex subunit 1 (SKA1) from Homo sapiens (Human).